A 64-amino-acid polypeptide reads, in one-letter code: Large ribosomal subunit protein bL32 (64 aa).

The segment at 1–35 is disordered; that stretch reads MAVQKSRVTPSRRGQRRSHDALTAKQLSTDPTSGE.

It belongs to the bacterial ribosomal protein bL32 family.

In Xanthomonas campestris pv. campestris (strain 8004), this protein is Large ribosomal subunit protein bL32.